The following is a 421-amino-acid chain: DNA (cytosine-5)-methyltransferase 3-like (421 aa).

A compositionally biased stretch (polar residues) spans 1–14; sequence MGSRETPSSCSKTL. Residues 1–39 form a disordered region; it reads MGSRETPSSCSKTLETLDLETSDSSSPDADSPLEEQWLK. The region spanning 75–207 is the ADD domain; it reads EVKVNRRSIE…LKAFHDQEGA (133 aa). The segment at 86 to 116 adopts a GATA-type; atypical zinc-finger fold; sequence ICLCCGTLQVYTRHPLFEGGLCAPCKDKFLE. A PHD-type; atypical zinc finger spans residues 127 to 183; that stretch reads QSYCTICCSGGTLFICESPDCTRCYCFECVDILVGPGTSERINAMACWVCFLCLPFS.

In terms of assembly, homodimer. Heterotetramer composed of 1 DNMT3A homodimer and 2 DNMT3L subunits (DNMT3L-DNMT3A-DNMT3A-DNMT3L). Interacts with histone H3 (via N-terminus); interaction is strongly inhibited by methylation at lysine 4 (H3K4me). Interacts with EZH2; the interaction is direct. Interacts with SPOCD1. In terms of tissue distribution, expressed in testis, thymus, ovary, and heart.

It is found in the nucleus. Catalytically inactive regulatory factor of DNA methyltransferases that can either promote or inhibit DNA methylation depending on the context. Essential for the function of DNMT3A and DNMT3B: activates DNMT3A and DNMT3B by binding to their catalytic domain. Acts by accelerating the binding of DNA and S-adenosyl-L-methionine (AdoMet) to the methyltransferases and dissociates from the complex after DNA binding to the methyltransferases. Recognizes unmethylated histone H3 lysine 4 (H3K4me0) and induces de novo DNA methylation by recruitment or activation of DNMT3. Plays a key role in embryonic stem cells and germ cells. In germ cells, required for the methylation of imprinted loci together with DNMT3A. In male germ cells, specifically required to methylate retrotransposons, preventing their mobilization. Plays a key role in embryonic stem cells (ESCs) by acting both as an positive and negative regulator of DNA methylation. While it promotes DNA methylation of housekeeping genes together with DNMT3A and DNMT3B, it also acts as an inhibitor of DNA methylation at the promoter of bivalent genes. Interacts with the EZH2 component of the PRC2/EED-EZH2 complex, preventing interaction of DNMT3A and DNMT3B with the PRC2/EED-EZH2 complex, leading to maintain low methylation levels at the promoters of bivalent genes. Promotes differentiation of ESCs into primordial germ cells by inhibiting DNA methylation at the promoter of RHOX5, thereby activating its expression. The protein is DNA (cytosine-5)-methyltransferase 3-like (Dnmt3l) of Mus musculus (Mouse).